Reading from the N-terminus, the 187-residue chain is Phospholipase A2-gamma (187 aa).

Positions 1-25 are cleaved as a signal peptide; the sequence is MITGLALSRVAFGLTAFLLLAVVSS. 6 disulfides stabilise this stretch: Cys29–Cys56, Cys33–Cys62, Cys38–Cys115, Cys49–Cys69, Cys68–Cys93, and Cys75–Cys86. The Ca(2+) site is built by Tyr48, Gly50, and Tyr53. The active site involves His72. Asp73 is a Ca(2+) binding site.

The protein belongs to the phospholipase A2 family. Requires Ca(2+) as cofactor. As to expression, strongly expressed in mature flowers but weakly expressed in other tissues. Detected in buds, open flowers and in pollen.

The protein resides in the secreted. Its subcellular location is the golgi apparatus. It is found in the trans-Golgi network. The protein localises to the endoplasmic reticulum. It catalyses the reaction a 1,2-diacyl-sn-glycero-3-phosphocholine + H2O = a 1-acyl-sn-glycero-3-phosphocholine + a fatty acid + H(+). PA2 catalyzes the calcium-dependent hydrolysis of the 2-acyl groups in 3-sn-phosphoglycerides. Releases lysophospholipids (LPLs) and free fatty acids (FFAs) from membrane phospholipids in response to hormones and other external stimuli. Plays a role in pollen development and germination and tube growth. The chain is Phospholipase A2-gamma (PLA2-GAMMA) from Arabidopsis thaliana (Mouse-ear cress).